The following is a 381-amino-acid chain: MARDYYGLLGVSRGASDAEIKRAYRKLARELHPDVNPDEAAQAKFKEISVAYEVLSDPEKRRIVDLGGDPLEGAAAAGGGFGGFGGLGDVFEAFFGGGFGGGTTSRGPIGRVRPGSDSLLRMRLDLEECATGVTKQVTVDTAVLCDRCHGKGTNGDSAPVPCDTCGGRGEVQTVQRSLLGQVMTSRPCPTCRGVGVVIPDPCHQCMGDGRVRARREISVKIPAGVGDGMRVRLAAQGEVGPGGGPAGDLYVEVHEQPHDVFVREGDDLHCTVSVPMVDAALGATVTVDAILDGVSEITIPPGTQPGSVITLRGHGMPHLRSGTRGDLHVHVEVVVPSRLDARDTELLREFKGRRGRDVPEVRSTHAGGGLFSRLRETFTGR.

A J domain is found at 4–68 (DYYGLLGVSR…EKRRIVDLGG (65 aa)). The segment at 132–214 (GVTKQVTVDT…CMGDGRVRAR (83 aa)) adopts a CR-type zinc-finger fold. 8 residues coordinate Zn(2+): Cys-145, Cys-148, Cys-162, Cys-165, Cys-188, Cys-191, Cys-202, and Cys-205. 4 CXXCXGXG motif repeats span residues 145–152 (CDRCHGKG), 162–169 (CDTCGGRG), 188–195 (CPTCRGVG), and 202–209 (CHQCMGDG).

The protein belongs to the DnaJ family. Homodimer. Zn(2+) serves as cofactor.

The protein localises to the cytoplasm. Participates actively in the response to hyperosmotic and heat shock by preventing the aggregation of stress-denatured proteins and by disaggregating proteins, also in an autonomous, DnaK-independent fashion. Unfolded proteins bind initially to DnaJ; upon interaction with the DnaJ-bound protein, DnaK hydrolyzes its bound ATP, resulting in the formation of a stable complex. GrpE releases ADP from DnaK; ATP binding to DnaK triggers the release of the substrate protein, thus completing the reaction cycle. Several rounds of ATP-dependent interactions between DnaJ, DnaK and GrpE are required for fully efficient folding. Also involved, together with DnaK and GrpE, in the DNA replication of plasmids through activation of initiation proteins. This chain is Chaperone protein DnaJ 1, found in Mycolicibacterium paratuberculosis (strain ATCC BAA-968 / K-10) (Mycobacterium paratuberculosis).